Reading from the N-terminus, the 162-residue chain is MERFFENAMYASRWLLAPIYMGLSLALLALTIKFFQEIFHVIPNIFAMAEADLILVLLSLIDMALVGGLLVMVMISGYENFVSQLDIDEGKEKLNWLGKMDSGSLKNKVAASIVAISSIHLLRIFMDAKNVPDNKLMWYVIIHMTFVLSAFAMGYLDKQTRH.

3 helical membrane-spanning segments follow: residues 15–35 (LLAPIYMGLSLALLALTIKFF), 53–73 (LILVLLSLIDMALVGGLLVMV), and 136–156 (LMWYVIIHMTFVLSAFAMGYL).

Belongs to the UPF0114 family.

Its subcellular location is the cell membrane. The chain is UPF0114 protein PSPA7_5214 from Pseudomonas paraeruginosa (strain DSM 24068 / PA7) (Pseudomonas aeruginosa (strain PA7)).